The following is a 455-amino-acid chain: Bifunctional protein GlmU (455 aa).

Residues 1–229 (MYNCAILLAA…FEETMGVNSR (229 aa)) are pyrophosphorylase. UDP-N-acetyl-alpha-D-glucosamine-binding positions include 8-11 (LAAG), lysine 22, glutamine 73, and 78-79 (GT). Residue aspartate 103 coordinates Mg(2+). Positions 140, 155, 170, and 227 each coordinate UDP-N-acetyl-alpha-D-glucosamine. Asparagine 227 contributes to the Mg(2+) binding site. The tract at residues 230-250 (LQLAEVEAIMRKRINAMHLEN) is linker. Positions 251–455 (GVTIIDPNNT…EDWVKKKDEK (205 aa)) are N-acetyltransferase. 2 residues coordinate UDP-N-acetyl-alpha-D-glucosamine: arginine 332 and lysine 350. The active-site Proton acceptor is histidine 362. UDP-N-acetyl-alpha-D-glucosamine contacts are provided by tyrosine 365 and asparagine 376. Acetyl-CoA-binding positions include 385-386 (NY), alanine 422, and arginine 439.

It in the N-terminal section; belongs to the N-acetylglucosamine-1-phosphate uridyltransferase family. In the C-terminal section; belongs to the transferase hexapeptide repeat family. As to quaternary structure, homotrimer. It depends on Mg(2+) as a cofactor.

The protein resides in the cytoplasm. The catalysed reaction is alpha-D-glucosamine 1-phosphate + acetyl-CoA = N-acetyl-alpha-D-glucosamine 1-phosphate + CoA + H(+). It catalyses the reaction N-acetyl-alpha-D-glucosamine 1-phosphate + UTP + H(+) = UDP-N-acetyl-alpha-D-glucosamine + diphosphate. The protein operates within nucleotide-sugar biosynthesis; UDP-N-acetyl-alpha-D-glucosamine biosynthesis; N-acetyl-alpha-D-glucosamine 1-phosphate from alpha-D-glucosamine 6-phosphate (route II): step 2/2. It participates in nucleotide-sugar biosynthesis; UDP-N-acetyl-alpha-D-glucosamine biosynthesis; UDP-N-acetyl-alpha-D-glucosamine from N-acetyl-alpha-D-glucosamine 1-phosphate: step 1/1. It functions in the pathway bacterial outer membrane biogenesis; LPS lipid A biosynthesis. Functionally, catalyzes the last two sequential reactions in the de novo biosynthetic pathway for UDP-N-acetylglucosamine (UDP-GlcNAc). The C-terminal domain catalyzes the transfer of acetyl group from acetyl coenzyme A to glucosamine-1-phosphate (GlcN-1-P) to produce N-acetylglucosamine-1-phosphate (GlcNAc-1-P), which is converted into UDP-GlcNAc by the transfer of uridine 5-monophosphate (from uridine 5-triphosphate), a reaction catalyzed by the N-terminal domain. This is Bifunctional protein GlmU from Clostridium tetani (strain Massachusetts / E88).